The primary structure comprises 268 residues: Glucosamine-6-phosphate deaminase (268 aa).

The Proton acceptor; for enolization step role is filled by D72. The For ring-opening step role is filled by D141. Residue H143 is the Proton acceptor; for ring-opening step of the active site. E148 serves as the catalytic For ring-opening step.

The protein belongs to the glucosamine/galactosamine-6-phosphate isomerase family. NagB subfamily.

The enzyme catalyses alpha-D-glucosamine 6-phosphate + H2O = beta-D-fructose 6-phosphate + NH4(+). It functions in the pathway amino-sugar metabolism; N-acetylneuraminate degradation; D-fructose 6-phosphate from N-acetylneuraminate: step 5/5. Its activity is regulated as follows. Allosterically activated by N-acetylglucosamine 6-phosphate (GlcNAc6P). In terms of biological role, catalyzes the reversible isomerization-deamination of glucosamine 6-phosphate (GlcN6P) to form fructose 6-phosphate (Fru6P) and ammonium ion. The polypeptide is Glucosamine-6-phosphate deaminase (Borreliella afzelii (strain PKo) (Borrelia afzelii)).